The sequence spans 599 residues: Kelch repeat and BTB domain-containing protein 8 (599 aa).

The tract at residues 1–25 is disordered; that stretch reads MAASADLSKSSPTPNGIPSSDTAND. Residues 7 to 25 show a composition bias toward polar residues; that stretch reads LSKSSPTPNGIPSSDTAND. The BTB domain maps to 49–117; that stretch reads TDIVVEVDHG…AYTSRVILTE (69 aa). The 103-residue stretch at 152 to 254 folds into the BACK domain; sequence SIGVFIFADH…MEDTFIEKIP (103 aa). Kelch repeat units follow at residues 334 to 388, 389 to 439, 441 to 479, 481 to 530, and 540 to 586; these read DIYI…YCCG, KMYA…EHKE, IYVLQGEFFLFYEPQKDYWGFLTPMTVPRIQGLAAVYKD, IYYI…LFQN, and QVTV…FECA.

The protein belongs to the KBTBD8 family. As to quaternary structure, component of the BCR(KBTBD8) E3 ubiquitin ligase complex, at least composed of CUL3, KBTBD8 and RBX1.

The protein localises to the cytoplasm. Its subcellular location is the cytoskeleton. It localises to the spindle. It is found in the golgi apparatus. In terms of biological role, substrate-specific adapter of a BCR (BTB-CUL3-RBX1) E3 ubiquitin ligase complex that acts as a regulator of neural crest specification. The BCR(KBTBD8) complex acts by mediating monoubiquitination of NOLC1 and TCOF1: monoubiquitination promotes the formation of a NOLC1-TCOF1 complex that acts as a platform to connect RNA polymerase I with enzymes responsible for ribosomal processing and modification, leading to remodel the translational program of differentiating cells in favor of neural crest specification. In Mus musculus (Mouse), this protein is Kelch repeat and BTB domain-containing protein 8 (Kbtbd8).